A 444-amino-acid polypeptide reads, in one-letter code: S-locus-specific glycoprotein BS29-1 (444 aa).

A signal peptide spans 1–28 (MRGVIPNYHHSYTLLFFVILVLFPHVFS). Positions 31–159 (TLSPNEALTI…KTTALDRFMW (129 aa)) constitute a Bulb-type lectin domain. Residues Asn43, Asn125, Asn180, Asn243, and Asn396 are each glycosylated (N-linked (GlcNAc...) asparagine). The region spanning 356 to 437 (CGEGDGFLRM…GGQDLYLKVA (82 aa)) is the PAN domain. Intrachain disulfides connect Cys387–Cys412 and Cys395–Cys397.

Stigma.

In terms of biological role, involved in sporophytic self-incompatibility system (the inability of flowering plants to achieve self-fertilization). The sequence is that of S-locus-specific glycoprotein BS29-1 (SLSG) from Brassica oleracea var. alboglabra (Chinese kale).